A 208-amino-acid polypeptide reads, in one-letter code: CKLF-like MARVEL transmembrane domain-containing protein 4 (208 aa).

Positions 1–11 (MRGGEELDGFE) are enriched in acidic residues. Positions 1–38 (MRGGEELDGFEGEASSTSMISGASSPYQPTTEPVSQRR) are disordered. A compositionally biased stretch (low complexity) spans 15–25 (SSTSMISGASS). Residues 49–176 (YLRGALGRLK…STFLAMQKWR (128 aa)) form the MARVEL domain. The next 4 helical transmembrane spans lie at 59–79 (VAQV…MECS), 85–105 (YFFE…LILF), 123–143 (LVNT…LAAL), and 151–171 (IAAV…TFLA). A Phosphoserine modification is found at serine 194.

It belongs to the chemokine-like factor family. Interacts with PD1L1 and CMTM6.

It localises to the membrane. Its function is as follows. Acts as a backup for CMTM6 to regulate plasma membrane expression of PD-L1/CD274, an immune inhibitory ligand critical for immune tolerance to self and antitumor immunity. May protect PD-L1/CD274 from being polyubiquitinated and targeted for degradation. The protein is CKLF-like MARVEL transmembrane domain-containing protein 4 of Mus musculus (Mouse).